A 268-amino-acid chain; its full sequence is MQREEKQLEACLDALISQVSDIKNSLVGFIHKLENEFDRLTWPSVLDSFALLSGQLNTLNKVLKNEKTPLLRNQVIIPLLLSPDRDEEIMRLTEGRVPVFSHEVVPDHLRTKPDPDVEELEKQLSAEAARITTEAAQKQVQSMNKMCSNLLDKISKEERESELGSLRQNKQTFNPTDTNALVAAVAFGKGLSNRRPPGQGGPMAPGQTGASGMLPSAAGMQQVPMSLQSNQQQQHMAGVSMSQGNQPGKMPSSIKTNIKSASMHPYQR.

Coiled-coil stretches lie at residues 1–26 (MQREEKQLEACLDALISQVSDIKNSL) and 117–160 (VEEL…EERE). The disordered stretch occupies residues 190 to 268 (GLSNRRPPGQ…KSASMHPYQR (79 aa)). A compositionally biased stretch (polar residues) spans 223 to 246 (VPMSLQSNQQQQHMAGVSMSQGNQ).

The protein belongs to the Mediator complex subunit 8 family. In terms of assembly, component of the Mediator complex. May be part of a multisubunit E3 ubiquitin-protein ligase complex.

It localises to the nucleus. It participates in protein modification; protein ubiquitination. Component of the Mediator complex, a coactivator involved in the regulated transcription of nearly all RNA polymerase II-dependent genes. Mediator functions as a bridge to convey information from gene-specific regulatory proteins to the basal RNA polymerase II transcription machinery. Mediator is recruited to promoters by direct interactions with regulatory proteins and serves as a scaffold for the assembly of a functional preinitiation complex with RNA polymerase II and the general transcription factors. May play a role as a target recruitment subunit in E3 ubiquitin-protein ligase complexes and thus in ubiquitination and subsequent proteasomal degradation of target proteins. The protein is Mediator of RNA polymerase II transcription subunit 8-A (med8-a) of Xenopus laevis (African clawed frog).